A 297-amino-acid polypeptide reads, in one-letter code: D-alanine--D-alanine ligase (297 aa).

Positions 95–294 (KMLWKAFGLP…FEQLVVKILE (200 aa)) constitute an ATP-grasp domain. Residue 125 to 180 (VAKLGLPLMVKPSLEGSSVGLTKVKAVEELKSAVEYALKFDNTILIEEWLAGDELT) participates in ATP binding. The Mg(2+) site is built by D248, E261, and N263.

Belongs to the D-alanine--D-alanine ligase family. The cofactor is Mg(2+). Requires Mn(2+) as cofactor.

Its subcellular location is the cytoplasm. The enzyme catalyses 2 D-alanine + ATP = D-alanyl-D-alanine + ADP + phosphate + H(+). It functions in the pathway cell wall biogenesis; peptidoglycan biosynthesis. Cell wall formation. The chain is D-alanine--D-alanine ligase from Haemophilus influenzae (strain PittEE).